A 248-amino-acid polypeptide reads, in one-letter code: Pulmonary surfactant-associated protein A (248 aa).

An N-terminal signal peptide occupies residues 1 to 17 (MWLRCLALALTLLMVSG). Asparagine 20 carries N-linked (GlcNAc...) asparagine glycosylation. The 73-residue stretch at 28–100 (GNPGIPGTPG…PGERGPPGLP (73 aa)) folds into the Collagen-like domain. The segment at 29 to 103 (NPGIPGTPGS…RGPPGLPASL (75 aa)) is disordered. 9 positions are modified to 4-hydroxyproline: proline 30, proline 33, proline 36, proline 42, proline 54, proline 57, proline 63, proline 67, and proline 70. Residues 42–51 (PGRDGRDGVK) show a composition bias toward basic and acidic residues. The segment covering 54-65 (PGPPGPLGPPGG) has biased composition (pro residues). Positions 84-93 (ERGEKGEPGE) are enriched in basic and acidic residues. The 117-residue stretch at 132 to 248 (LVVGRKVFSS…LQYRLAICEF (117 aa)) folds into the C-type lectin domain. Disulfide bonds link cysteine 155/cysteine 246 and cysteine 224/cysteine 238. Asparagine 207 is a glycosylation site (N-linked (GlcNAc...) asparagine). Ca(2+) is bound by residues glutamate 215, arginine 217, and asparagine 234.

Belongs to the SFTPA family. Oligomeric complex of 6 set of homotrimers.

Its subcellular location is the secreted. The protein resides in the extracellular space. The protein localises to the extracellular matrix. It is found in the surface film. Functionally, in presence of calcium ions, it binds to surfactant phospholipids and contributes to lower the surface tension at the air-liquid interface in the alveoli of the mammalian lung and is essential for normal respiration. Enhances the expression of MYO18A/SP-R210 on alveolar macrophages. This Canis lupus familiaris (Dog) protein is Pulmonary surfactant-associated protein A (SFTPA1).